We begin with the raw amino-acid sequence, 140 residues long: Transcription antitermination protein NusB (140 aa).

Belongs to the NusB family.

In terms of biological role, involved in transcription antitermination. Required for transcription of ribosomal RNA (rRNA) genes. Binds specifically to the boxA antiterminator sequence of the ribosomal RNA (rrn) operons. This chain is Transcription antitermination protein NusB, found in Alteromonas mediterranea (strain DSM 17117 / CIP 110805 / LMG 28347 / Deep ecotype).